An 871-amino-acid polypeptide reads, in one-letter code: Nonsense-mediated mRNA decay factor SMG8 (871 aa).

Positions 541–596 are disordered; the sequence is LDDMELPESLQQSYTSSEDSSEDDDDFAIQTASSEDSLSGSDSYARPGSRRDEFES. A compositionally biased stretch (low complexity) spans 573–583; that stretch reads SSEDSLSGSDS.

The protein belongs to the SMG8 family.

In terms of biological role, involved in nonsense-mediated decay (NMD) of mRNAs containing premature stop codons. Probable component of kinase complex containing smg-1 and recruited to stalled ribosomes. This is Nonsense-mediated mRNA decay factor SMG8 (smg-8) from Caenorhabditis briggsae.